The chain runs to 901 residues: Bifunctional protein STORR (901 aa).

The helical transmembrane segment at 12 to 32 (TSSVVALLLALVSILSSVVVL) threads the bilayer. C513 serves as a coordination point for heme.

It in the N-terminal section; belongs to the cytochrome P450 family. In the C-terminal section; belongs to the aldo/keto reductase family. The cofactor is heme.

It localises to the membrane. The catalysed reaction is (R)-reticuline + NADP(+) = 1,2-dehydroreticuline + NADPH + H(+). The enzyme catalyses (S)-reticuline + reduced [NADPH--hemoprotein reductase] + O2 = 1,2-dehydroreticuline + oxidized [NADPH--hemoprotein reductase] + 2 H2O + H(+). It participates in alkaloid biosynthesis; morphine biosynthesis. Its function is as follows. Bifunctional protein involved in the biosynthesis of morphinan-type benzylisoquinoline alkaloids. Required for the isomerization of (S)- to (R)-reticuline. The cytochrome P450 module is responsible for the conversion of (S)-reticuline to 1,2-dehydroreticuline while the oxidoreductase module converts 1,2-dehydroreticuline to (R)-reticuline. The protein is Bifunctional protein STORR of Papaver somniferum (Opium poppy).